The following is a 400-amino-acid chain: Transcription initiation factor IIF subunit beta (400 aa).

Over residues 1–19 (MSSGSAGAPALSNNSTNSV) the composition is skewed to polar residues. Residues 1–47 (MSSGSAGAPALSNNSTNSVAKEKSGNISGDEYLSQEEEVFDGNDIEN) form a disordered region. A phosphoserine mark is found at Ser-28, Ser-34, and Ser-56. A compositionally biased stretch (acidic residues) spans 33–47 (LSQEEEVFDGNDIEN). Disordered regions lie at residues 165 to 194 (QERE…VMTD) and 366 to 400 (TLGE…EDVV). Residues 174–189 (KQQQQKRRNNRKKFNH) are compositionally biased toward basic residues. Residues 386–400 (AEADLEDEIEMEDVV) are compositionally biased toward acidic residues.

Belongs to the TFIIF beta subunit family. TFIIF is composed of three different subunits: TFG1/RAP74, TFG2/RAP30 and TAF14.

It is found in the nucleus. Its function is as follows. TFIIF is a general transcription initiation factor that binds to RNA polymerase II. Its functions include the recruitment of RNA polymerase II to the promoter bound DNA-TBP-TFIIB complex, decreasing the affinity of RNA polymerase II for non-specific DNA, allowing for the subsequent recruitment of TFIIE and TFIIH, and facilitating RNA polymerase II elongation. The protein is Transcription initiation factor IIF subunit beta (TFG2) of Saccharomyces cerevisiae (strain ATCC 204508 / S288c) (Baker's yeast).